A 217-amino-acid chain; its full sequence is MKFFVDTAEIDAIAELNDLGMVDGVTTNPSLIKKSGRDIIEVTREICAMVDGPVSAEVTATDAETMIAEGRKLVEIAGNIAVKVPLTWDGLKACKVLSDDGHMVNVTLCFSANQALLAAKAGATFISPFIGRLDDINLDGMELIEDIRTIYDNYGFETQILAASIRSVNHILDSARIGADVITAPPAVIKAMVNHPLTDKGLDAFLADIKAADIKIL.

The Schiff-base intermediate with substrate role is filled by Lys-83.

Belongs to the transaldolase family. Type 3B subfamily.

It is found in the cytoplasm. It catalyses the reaction D-sedoheptulose 7-phosphate + D-glyceraldehyde 3-phosphate = D-erythrose 4-phosphate + beta-D-fructose 6-phosphate. The protein operates within carbohydrate degradation; pentose phosphate pathway; D-glyceraldehyde 3-phosphate and beta-D-fructose 6-phosphate from D-ribose 5-phosphate and D-xylulose 5-phosphate (non-oxidative stage): step 2/3. In terms of biological role, transaldolase is important for the balance of metabolites in the pentose-phosphate pathway. The protein is Probable transaldolase of Ruegeria pomeroyi (strain ATCC 700808 / DSM 15171 / DSS-3) (Silicibacter pomeroyi).